The chain runs to 285 residues: ADNRRPIWNLAHMVNAVAQIPSFLDLGANALEADVTFKGSVPTYTYHGTPCDFGRDCIRWEYFNVFLKTLKEYTTPGNAKYRDGFILFVLDLKTGSLSNDQVRPAGENVAKELLQNYWNNGNNGGRAYVVLSLPDIGHYEFVRGFKEVLKKEGHEDLLEKVGYDFSGPYLPSLPTLDATHEAYKKAGVDGHIWLSDGLTNFSPLGDMARLKEAIKSRDSANGFINKIYYWSVDKVSTTKAALDVGVDGIMTNHPNVLIGVLKENGYNDKYRLATYDDNPWETFKN.

His12 is an active-site residue. The Mg(2+) site is built by Glu32 and Asp34. The active-site Nucleophile is the His47. Cys51 and Cys57 form a disulfide bridge. Mg(2+) is bound at residue Asp91.

This sequence belongs to the arthropod phospholipase D family. Class I subfamily. Requires Mg(2+) as cofactor. In terms of tissue distribution, expressed by the venom gland.

It localises to the secreted. The catalysed reaction is an N-(acyl)-sphingosylphosphocholine = an N-(acyl)-sphingosyl-1,3-cyclic phosphate + choline. It catalyses the reaction an N-(acyl)-sphingosylphosphoethanolamine = an N-(acyl)-sphingosyl-1,3-cyclic phosphate + ethanolamine. The enzyme catalyses a 1-acyl-sn-glycero-3-phosphocholine = a 1-acyl-sn-glycero-2,3-cyclic phosphate + choline. It carries out the reaction a 1-acyl-sn-glycero-3-phosphoethanolamine = a 1-acyl-sn-glycero-2,3-cyclic phosphate + ethanolamine. In terms of biological role, dermonecrotic toxins cleave the phosphodiester linkage between the phosphate and headgroup of certain phospholipids (sphingolipid and lysolipid substrates), forming an alcohol (often choline) and a cyclic phosphate. This toxin acts on sphingomyelin (SM) with high activity (56.8 U/mg). It may also act on ceramide phosphoethanolamine (CPE), lysophosphatidylcholine (LPC) and lysophosphatidylethanolamine (LPE), but not on lysophosphatidylserine (LPS), and lysophosphatidylglycerol (LPG). It acts by transphosphatidylation, releasing exclusively cyclic phosphate products as second products. Induces dermonecrosis, hemolysis, increased vascular permeability, edema, inflammatory response, and platelet aggregation. Is lethal to mice. The sequence is that of Dermonecrotic toxin LlSicTox-alphaIII1ii from Loxosceles laeta (South American recluse spider).